A 2388-amino-acid polypeptide reads, in one-letter code: Highly reducing polyketide synthase Preu1 (2388 aa).

In terms of domain architecture, Ketosynthase family 3 (KS3) spans 7 to 432; the sequence is NDDIAIVGLA…GTNAHVILDD (426 aa). Residues cysteine 180, histidine 315, and histidine 355 each act as for beta-ketoacyl synthase activity in the active site. The segment at 549 to 875 is malonyl-CoA:ACP transacylase (MAT) domain; sequence GFVFTGQGAQ…SSVLMRGEDG (327 aa). The active-site For malonyltransferase activity is serine 641. Residues 940 to 1074 form an N-terminal hotdog fold region; that stretch reads HDLLGAPTQD…GLGKIHYRPE (135 aa). A PKS/mFAS DH domain is found at 940 to 1256; that stretch reads HDLLGAPTQD…CRELPNGNSQ (317 aa). Residues 941–1251 are dehydratase (DH) domain; sequence DLLGAPTQDS…VEGLRCRELP (311 aa). The active-site Proton acceptor; for dehydratase activity is the histidine 972. Positions 1102–1256 are C-terminal hotdog fold; sequence TASISPVDFY…CRELPNGNSQ (155 aa). Aspartate 1167 serves as the catalytic Proton donor; for dehydratase activity. The segment at 1676–1983 is enoyl reductase (ER) domain; it reads KLPSDARFTS…VPTGLGKAVL (308 aa). The interval 2007–2191 is ketoreductase (KR) domain; that stretch reads ATYVLAGGLG…AATSVDLGLM (185 aa). One can recognise a Carrier domain in the interval 2303-2380; it reads QANGIVLEAL…ALAEKISKAS (78 aa). Serine 2340 carries the O-(pantetheine 4'-phosphoryl)serine modification.

Requires pantetheine 4'-phosphate as cofactor.

Its function is as follows. Highly reducing polyketide synthase; part of a gene cluster that mediates the biosynthesis of a yet unidentified natural product. This Preussia isomera (Coprophilous fungus) protein is Highly reducing polyketide synthase Preu1.